A 486-amino-acid polypeptide reads, in one-letter code: Keratin, type II cuticular Hb6 (486 aa).

A head region spans residues 1 to 106; it reads MTCGSYCGGR…PNAQCVKHEE (106 aa). Residues 106–417 enclose the IF rod domain; the sequence is EKEQIKCLNS…RLLEGEEQRL (312 aa). The segment at 107-141 is coil 1A; the sequence is KEQIKCLNSKFAAFIDKVRFLEQQNKLLETKWQFY. The linker 1 stretch occupies residues 142 to 151; the sequence is QNRKCCESNM. The interval 152 to 252 is coil 1B; sequence EPLFEGYIEA…YDEETRILHS (101 aa). A Glycyl lysine isopeptide (Lys-Gly) (interchain with G-Cter in SUMO1) cross-link involves residue K212. Residues 253 to 269 are linker 12; that stretch reads HISDTSIVVKMDNSRDL. The interval 270-413 is coil 2; sequence NMDCVVAEIK…TTYRRLLEGE (144 aa). The segment at 414 to 486 is tail; that stretch reads EQRLCEGVGS…GACSGGCKKC (73 aa).

This sequence belongs to the intermediate filament family. As to quaternary structure, heterotetramer of two type I and two type II keratins.

The polypeptide is Keratin, type II cuticular Hb6 (Krt86) (Mus musculus (Mouse)).